A 145-amino-acid chain; its full sequence is Small ribosomal subunit protein uS15 (145 aa).

Belongs to the universal ribosomal protein uS15 family. Part of the 30S ribosomal subunit.

The chain is Small ribosomal subunit protein uS15 from Thermoplasma acidophilum (strain ATCC 25905 / DSM 1728 / JCM 9062 / NBRC 15155 / AMRC-C165).